The following is a 384-amino-acid chain: Prostaglandin E synthase 2 (384 aa).

Residues Met-1–Arg-56 are Lumenal-facing. Residues Leu-57 to His-73 traverse the membrane as a helical segment. Residues Thr-74–Asp-384 are Cytoplasmic-facing. The 104-residue stretch at Ser-89 to Lys-192 folds into the Glutaredoxin domain. Glutathione-binding positions include Val-147 and Asp-163–Ser-164. In terms of domain architecture, GST C-terminal spans Tyr-262–His-376.

The protein belongs to the GST superfamily. As to quaternary structure, homodimer. Interacts with EXOSC10. May interact with CEBPB. Post-translationally, synthesized as a Golgi membrane-associated protein, and the proteolytic removal of the N-terminal hydrophobic domain leads to the formation of a mature cytosolic enzyme. Widely expressed. Expressed in brain, heart, liver, colon and lung.

The protein resides in the golgi apparatus membrane. The protein localises to the nucleus. Its subcellular location is the cytoplasm. It catalyses the reaction prostaglandin H2 = prostaglandin E2. The catalysed reaction is prostaglandin H2 = (12S)-hydroxy-(5Z,8E,10E)-heptadecatrienoate + malonaldehyde. It functions in the pathway lipid metabolism; prostaglandin biosynthesis. Its activity is regulated as follows. Isomerase activity is increased by sulfhydril compounds. Dithiothreitol (DTT) is most effective, followed by glutathione (GSH) and 2-mercaptoethanol. Functionally, isomerase that catalyzes the conversion of PGH2 into the more stable prostaglandin E2 (PGE2) (in vitro). The biological function and the GSH-dependent property of PTGES2 is still under debate. In vivo, PTGES2 could form a complex with GSH and heme and would not participate in PGE2 synthesis but would catalyze the degradation of prostaglandin E2 H2 (PGH2) to 12(S)-hydroxy-5(Z),8(E),10(E)-heptadecatrienoic acid (HHT) and malondialdehyde (MDA). May also have transactivation activity toward IFN-gamma (IFNG), possibly via an interaction with CEBPB; however, the relevance of transcription activation activity remains unclear. The polypeptide is Prostaglandin E synthase 2 (Ptges2) (Mus musculus (Mouse)).